A 532-amino-acid chain; its full sequence is Probable cytochrome c oxidase subunit 1 (532 aa).

Transmembrane regions (helical) follow at residues 33 to 53, 74 to 94, 95 to 115, 118 to 138, 163 to 183, 200 to 220, 252 to 272, and 284 to 304; these read IMYI…SLLF, VLIT…ALFG, GFGN…FPRL, ISFW…FVDG, MAIF…INLI, PLFV…MPVL, LFWF…FGIV, and IFGY…GFIV. Residue H79 participates in Fe(II)-heme a binding. 2 residues coordinate Cu cation: H258 and Y262. Cu cation is bound by residues H307 and H308. 2 helical membrane passes run 318-338 and 355-375; these read ALIY…IKIF and MLFS…GIIL. Heme a3 is bound at residue H393. The next 3 helical transmembrane spans lie at 394–414, 431–451, and 473–493; these read FHYT…YYWF, FWIT…LGLA, and IGAG…FYTL. A Fe(II)-heme a-binding site is contributed by H395.

The protein belongs to the heme-copper respiratory oxidase family.

It localises to the cell membrane. It catalyses the reaction 4 Fe(II)-[cytochrome c] + O2 + 8 H(+)(in) = 4 Fe(III)-[cytochrome c] + 2 H2O + 4 H(+)(out). Its pathway is energy metabolism; oxidative phosphorylation. Cytochrome c oxidase is the component of the respiratory chain that catalyzes the reduction of oxygen to water. Subunits 1-3 form the functional core of the enzyme complex. CO I is the catalytic subunit of the enzyme. Electrons originating in cytochrome c are transferred via the copper A center of subunit 2 and heme A of subunit 1 to the bimetallic center formed by heme A3 and copper B. This Rickettsia conorii (strain ATCC VR-613 / Malish 7) protein is Probable cytochrome c oxidase subunit 1 (ctaD).